A 311-amino-acid polypeptide reads, in one-letter code: Manganese-dependent inorganic pyrophosphatase (311 aa).

His-10, Asp-14, Asp-16, Asp-75, His-97, and Asp-149 together coordinate Mn(2+).

It belongs to the PPase class C family. As to quaternary structure, homodimer. It depends on Mn(2+) as a cofactor.

It carries out the reaction diphosphate + H2O = 2 phosphate + H(+). This chain is Manganese-dependent inorganic pyrophosphatase (ppaC), found in Methanothrix thermoacetophila (strain DSM 6194 / JCM 14653 / NBRC 101360 / PT) (Methanosaeta thermophila).